The primary structure comprises 1871 residues: Girdin (1871 aa).

A Calponin-homology (CH) domain is found at 12-132 (QFMTSPLVTW…KLLLLLLGCA (121 aa)). Residues 196-425 (HLKRLIDERD…EMAQKQSMDE (230 aa)) are a coiled coil. Phosphoserine is present on residues Ser-233, Ser-237, and Ser-449. Positions 458–1385 (TSSRLLKLEM…KIMDQYKFYD (928 aa)) form a coiled coil. Disordered stretches follow at residues 816-842 (ENKSLEQETSQLEKDKKQLEKENKRLR) and 1010-1035 (RQDEERMVQSSPPISGEDNKWERESQ). Ser-1020 is modified (phosphoserine). Positions 1026 to 1035 (EDNKWERESQ) are enriched in basic and acidic residues. Ser-1387 is subject to Phosphoserine. The phosphoinositide-binding stretch occupies residues 1390 to 1408 (RRRGNWITLKMRKLIKSKK). A compositionally biased stretch (basic and acidic residues) spans 1407–1416 (KKDINRERQK). Disordered regions lie at residues 1407–1459 (KKDI…LGTK) and 1559–1601 (TTSF…SNNN). Phosphoserine; by PKB/AKT1 is present on Ser-1417. Composition is skewed to polar residues over residues 1417–1430 (SLTLTPTRSDSSEG), 1445–1459 (VGSNSLEDGQTLGTK), and 1559–1578 (TTSFEDISPQGVSDDSSTGS). The residue at position 1421 (Thr-1421) is a Phosphothreonine. Residues 1672–1702 (KTGSPGSEVVTLQQFLEESNKLTSVQIKSSS) carry the GBA motif. Thr-1673 carries the post-translational modification Phosphothreonine. Ser-1675 is subject to Phosphoserine. Ser-1690 is subject to Phosphoserine; by PKC/PRKCQ. The tract at residues 1713-1823 (SLSVSSDFLG…GTTRRTSIHD (111 aa)) is SH2-like; required for interaction with growth factor receptors. Ser-1717 bears the Phosphoserine mark. A disordered region spans residues 1736 to 1871 (SGKTPGDFYD…KSRSREQQSS (136 aa)). Residues 1743-1763 (FYDRRTTKPEFLRPGPRKTED) show a composition bias toward basic and acidic residues. Phosphotyrosine occurs at positions 1765 and 1799. Composition is skewed to polar residues over residues 1787–1799 (SSLSRQSKDSNPY) and 1807–1818 (SVISTAEGTTRR). Phosphoserine is present on residues Ser-1820 and Ser-1837. A compositionally biased stretch (basic and acidic residues) spans 1820–1830 (SIHDFLTKDSR). Low complexity predominate over residues 1838-1851 (PPAAADSNTTAASN). Residues 1854 to 1871 (KVQESRNSKSRSREQQSS) show a composition bias toward basic and acidic residues.

This sequence belongs to the CCDC88 family. As to quaternary structure, homodimer. Interacts (via GBA motif) with guanine nucleotide-binding protein G(i) alpha subunits GNAI1, GNAI2 and GNAI3. Also interacts (via GNA motif) with guanine nucleotide-binding protein G(s) alpha subunit GNAS. Interaction with G(i) alpha subunits occurs before interaction with GNAS and is regulated by phosphorylation; phosphorylation at Ser-1675 enhances binding to G(i) alpha subunits while phosphorylation at Ser-1690 abolishes G(i) alpha subunit binding, promoting binding to GNAS. Interacts (via C-terminal SH2-like region) with growth factor receptors EGFR, INSR and KDR/VEGFR2 (via their autophosphorylated cytoplasmic tails). Forms a complex with EGFR and GNAI3 which leads to enhanced EGFR signaling and triggering of cell migration; ligand stimulation is required for recruitment of GNAI3 to the complex. Interacts (tyrosine-phosphorylated form) with phosphatidylinositol 3-kinase (PI3K) regulatory subunit PIK3R1/p85a (via SH2 domains); the interaction enables recruitment of PIK3R1 to the EGFR receptor, enhancing PI3K activity and cell migration. Interacts with serine/threonine-protein kinase PRKCQ; the interaction leads to phosphorylation of CCDC88A and inhibition of its guanine nucleotide exchange factor activity. Interacts (via C-terminus) with DISC1; the interaction is direct. Interacts with AKT proteins; the interaction is inhibited in the presence of DISC1. Interacts with AKT1/PKB (via C-terminus). The non-phosphorylated form interacts with phosphatidylinositol 4-phosphate [PI(4)P] and weakly with phosphatidylinositol 3-phosphate [PI(3)P]. Interacts with microtubules. Interacts with actin. In terms of processing, phosphorylation is induced by epidermal growth factor (EGF) in a phosphoinositide 3-kinase (PI3K)-dependent manner. Phosphorylation by AKT1/PKB is necessary for delocalization from the cell membrane and for cell migration. Phosphorylated on tyrosine residues which promotes binding to phosphatidylinositol 3-kinase (PI3K) regulatory subunit PIK3R1/p85a and enhances PI3K activity. Tyrosine-phosphorylated by both receptor and non-receptor tyrosine kinases in vitro. Tyrosine phosphorylation is required for AKT1-dependent phosphorylation of Ser-1417. Phosphorylation at Ser-1690 by PRKCQ disrupts interaction with GNAI3 and inhibits guanine nucleotide exchange factor activity. Expressed ubiquitously.

The protein resides in the cell membrane. It is found in the cytoplasm. The protein localises to the cytosol. Its subcellular location is the cytoplasmic vesicle. It localises to the cell projection. The protein resides in the lamellipodium. It is found in the cytoskeleton. The protein localises to the cilium basal body. Its subcellular location is the microtubule organizing center. It localises to the centrosome. The protein resides in the centriole. Bifunctional modulator of guanine nucleotide-binding proteins (G proteins). Acts as a non-receptor guanine nucleotide exchange factor which binds to and activates guanine nucleotide-binding protein G(i) alpha subunits. Also acts as a guanine nucleotide dissociation inhibitor for guanine nucleotide-binding protein G(s) subunit alpha GNAS. Essential for cell migration. Interacts in complex with G(i) alpha subunits with the EGFR receptor, retaining EGFR at the cell membrane following ligand stimulation and promoting EGFR signaling which triggers cell migration. Binding to Gi-alpha subunits displaces the beta and gamma subunits from the heterotrimeric G-protein complex which enhances phosphoinositide 3-kinase (PI3K)-dependent phosphorylation and kinase activity of AKT1/PKB. Phosphorylation of AKT1/PKB induces the phosphorylation of downstream effectors GSK3 and FOXO1/FKHR, and regulates DNA replication and cell proliferation. Binds in its tyrosine-phosphorylated form to the phosphatidylinositol 3-kinase (PI3K) regulatory subunit PIK3R1 which enables recruitment of PIK3R1 to the EGFR receptor, enhancing PI3K activity and cell migration. Plays a role as a key modulator of the AKT-mTOR signaling pathway, controlling the tempo of the process of newborn neuron integration during adult neurogenesis, including correct neuron positioning, dendritic development and synapse formation. Inhibition of G(s) subunit alpha GNAS leads to reduced cellular levels of cAMP and suppression of cell proliferation. Essential for the integrity of the actin cytoskeleton. Required for formation of actin stress fibers and lamellipodia. May be involved in membrane sorting in the early endosome. Plays a role in ciliogenesis and cilium morphology and positioning and this may partly be through regulation of the localization of scaffolding protein CROCC/Rootletin. The chain is Girdin (CCDC88A) from Homo sapiens (Human).